The chain runs to 146 residues: Suppressor APC domain-containing protein 1 (146 aa).

The disordered stretch occupies residues His121–Val146. Over residues Pro137 to Val146 the composition is skewed to pro residues.

The chain is Suppressor APC domain-containing protein 1 (Sapcd1) from Mus musculus (Mouse).